A 431-amino-acid chain; its full sequence is Transmembrane protease serine 11C (431 aa).

At 1 to 33 (MARGQPRRSEEQWTALQNRTECKTKIKLTRCGK) the chain is on the cytoplasmic side. Residues 34 to 54 (ITLGILTAVLAAVLIGLIAYF) form a helical; Signal-anchor for type II membrane protein membrane-spanning segment. Residues 55-431 (AACGKDSFYY…RDWITSKTGL (377 aa)) lie on the Extracellular side of the membrane. The region spanning 60 to 177 (DSFYYHVSFK…SSFKFSDIAM (118 aa)) is the SEA domain. Residue asparagine 99 is glycosylated (N-linked (GlcNAc...) asparagine). In terms of domain architecture, Peptidase S1 spans 200-430 (VAGGQDAEEG…YRDWITSKTG (231 aa)). Cysteine 225 and cysteine 241 are joined by a disulfide. The active-site Charge relay system is the histidine 240. Asparagine 276 is a glycosylation site (N-linked (GlcNAc...) asparagine). Catalysis depends on aspartate 285, which acts as the Charge relay system. Asparagine 347 carries N-linked (GlcNAc...) asparagine glycosylation. 2 disulfide bridges follow: cysteine 350-cysteine 366 and cysteine 377-cysteine 406. The active-site Charge relay system is serine 381.

It belongs to the peptidase S1 family. Proteolytically cleaved via an autocatalytic mechanism. As to expression, expressed specifically in Purkinje neurons of the cerebellum (at protein level). Also detected in spinal cord.

The protein localises to the cell membrane. The protein resides in the cell projection. It is found in the dendrite. Its subcellular location is the perikaryon. Serine protease which has a preference for Arg or Lys in position P1 and uncharged residues in positions P2 and P3. Shows specificity towards FGF2 in vitro. The chain is Transmembrane protease serine 11C from Mus musculus (Mouse).